Here is a 476-residue protein sequence, read N- to C-terminus: mRNA-capping enzyme subunit beta (476 aa).

Residues 1-133 (MNVGSILNDE…KLKSTNKPRR (133 aa)) are disordered. Composition is skewed to basic and acidic residues over residues 51–67 (LKTKETKKDWSEDEHSN) and 105–114 (HPIEQDKSEK). The span at 123–132 (SKLKSTNKPR) shows a compositional bias: basic residues.

Belongs to the fungal TPase family. In terms of assembly, heterodimer. The mRNA-capping enzyme is composed of two separate chains alpha and beta, respectively a mRNA guanylyltransferase and an mRNA 5'-triphosphate monophosphatase. Mg(2+) is required as a cofactor.

The protein localises to the nucleus. It carries out the reaction a 5'-end triphospho-ribonucleoside in mRNA + H2O = a 5'-end diphospho-ribonucleoside in mRNA + phosphate + H(+). In terms of biological role, first step of mRNA capping. Converts the 5'-triphosphate end of a nascent mRNA chain into a diphosphate end. This Debaryomyces hansenii (strain ATCC 36239 / CBS 767 / BCRC 21394 / JCM 1990 / NBRC 0083 / IGC 2968) (Yeast) protein is mRNA-capping enzyme subunit beta (CET1).